The primary structure comprises 203 residues: Guanylate kinase (203 aa).

The region spanning 5–183 (GVLYIISAPS…AVEELKSVVV (179 aa)) is the Guanylate kinase-like domain. Residue 12-19 (APSGAGKT) participates in ATP binding.

It belongs to the guanylate kinase family.

The protein resides in the cytoplasm. The catalysed reaction is GMP + ATP = GDP + ADP. Its function is as follows. Essential for recycling GMP and indirectly, cGMP. The chain is Guanylate kinase from Geobacter metallireducens (strain ATCC 53774 / DSM 7210 / GS-15).